Reading from the N-terminus, the 184-residue chain is Signal peptidase complex subunit 3 (184 aa).

Topologically, residues 1–14 (MFSFVQRFQNVSNQ) are cytoplasmic. The helical; Signal-anchor for type II membrane protein transmembrane segment at 15 to 35 (AFSMGIVMVVFIMASSYYQLI) threads the bilayer. Residues 36–184 (NNNAFSVPSN…TLTVENKNKV (149 aa)) lie on the Lumenal side of the membrane. N-linked (GlcNAc...) asparagine glycosylation is found at Asn-102 and Asn-173.

This sequence belongs to the SPCS3 family. As to quaternary structure, component of the signal peptidase complex (SPC) composed of a catalytic subunit SEC11 and three accessory subunits SPC1, SPC2 and SPC3. The complex induces a local thinning of the ER membrane which is used to measure the length of the signal peptide (SP) h-region of protein substrates. This ensures the selectivity of the complex towards h-regions shorter than 18-20 amino acids. Interacts with SEC11. SPC associates with the translocon complex.

The protein resides in the endoplasmic reticulum membrane. Essential component of the signal peptidase complex (SPC) which catalyzes the cleavage of N-terminal signal sequences from nascent proteins as they are translocated into the lumen of the endoplasmic reticulum. Essential for the SPC catalytic activity, possibly by stabilizing and positioning the active center of the complex close to the lumenal surface. Essential for viability. The chain is Signal peptidase complex subunit 3 (SPC3) from Saccharomyces cerevisiae (strain ATCC 204508 / S288c) (Baker's yeast).